A 422-amino-acid chain; its full sequence is Serine--tRNA ligase (422 aa).

An L-serine-binding site is contributed by 231–233 (TSE). Position 262-264 (262-264 (RQE)) interacts with ATP. An L-serine-binding site is contributed by Glu285. 349 to 352 (EISS) is a binding site for ATP. Residue Ser384 participates in L-serine binding.

It belongs to the class-II aminoacyl-tRNA synthetase family. Type-1 seryl-tRNA synthetase subfamily. In terms of assembly, homodimer. The tRNA molecule binds across the dimer.

It localises to the cytoplasm. It carries out the reaction tRNA(Ser) + L-serine + ATP = L-seryl-tRNA(Ser) + AMP + diphosphate + H(+). It catalyses the reaction tRNA(Sec) + L-serine + ATP = L-seryl-tRNA(Sec) + AMP + diphosphate + H(+). Its pathway is aminoacyl-tRNA biosynthesis; selenocysteinyl-tRNA(Sec) biosynthesis; L-seryl-tRNA(Sec) from L-serine and tRNA(Sec): step 1/1. Catalyzes the attachment of serine to tRNA(Ser). Is also able to aminoacylate tRNA(Sec) with serine, to form the misacylated tRNA L-seryl-tRNA(Sec), which will be further converted into selenocysteinyl-tRNA(Sec). This Mycoplasma mycoides subsp. mycoides SC (strain CCUG 32753 / NCTC 10114 / PG1) protein is Serine--tRNA ligase.